We begin with the raw amino-acid sequence, 271 residues long: Autophagy-related protein 5 (271 aa).

Residue Lys145 forms a Glycyl lysine isopeptide (Lys-Gly) (interchain with G-Cter in ATG12) linkage.

This sequence belongs to the ATG5 family. Conjugated with ATG12. Interacts with ATG10. The ATG5-ATG12 conjugate forms a complex with several units of ATG16. The ATG12-ATG5 conjugate also associates with ATG3. Conjugated to ATG12; which is essential for autophagy. Conjugation with ATG12 involves ATG7 as an E1-like activating enzyme and ATG10 as an E2-like conjugating enzyme.

Its subcellular location is the preautophagosomal structure membrane. In terms of biological role, involved in cytoplasm to vacuole transport (Cvt) and autophagic vesicle formation. Autophagy is essential for maintenance of amino acid levels and protein synthesis under nitrogen starvation. Required for selective autophagic degradation of the nucleus (nucleophagy). Also required for mitophagy, which eliminates defective or superfluous mitochondria in order to fulfill cellular energy requirements and prevent excess ROS production. Conjugation with ATG12, through a ubiquitin-like conjugating system involving ATG7 as an E1-like activating enzyme and ATG10 as an E2-like conjugating enzyme, is essential for its function. The ATG12-ATG5 conjugate acts as an E3-like enzyme which is required for lipidation of ATG8 and ATG8 association to the vesicle membranes. ATG12-ATG5 rearranges the ATG3 catalytic center and enhances its E2 activity. This Kluyveromyces marxianus (strain DMKU3-1042 / BCC 29191 / NBRC 104275) (Yeast) protein is Autophagy-related protein 5.